We begin with the raw amino-acid sequence, 564 residues long: Potassium-transporting ATPase potassium-binding subunit (564 aa).

The next 10 membrane-spanning stretches (helical) occupy residues 4–24 (HEILLILAFFALVLVPAPFLG), 67–87 (TLALLAFNLAGLVLLFSILML), 135–155 (VGLTVQNFVSAAVGLCVLVAL), 179–199 (LYVLLPLCLLLALLLVWQGVP), 258–278 (FEVASIILIPAALVFTFGHYV), 286–306 (AILGCMLLLFCLGLGLSLWAE), 376–396 (IFGGVGAGLYGMLLFVLIAVF), 420–440 (LLVFTLLVMPVGVLVLGAIAA), 487–507 (LMIGLAMLIGRFGYILPILAI), and 528–548 (GPLFVSLLTVTILLVGGLTFL).

Belongs to the KdpA family. The system is composed of three essential subunits: KdpA, KdpB and KdpC.

It is found in the cell inner membrane. Functionally, part of the high-affinity ATP-driven potassium transport (or Kdp) system, which catalyzes the hydrolysis of ATP coupled with the electrogenic transport of potassium into the cytoplasm. This subunit binds the periplasmic potassium ions and delivers the ions to the membrane domain of KdpB through an intramembrane tunnel. The sequence is that of Potassium-transporting ATPase potassium-binding subunit from Pseudomonas aeruginosa (strain ATCC 15692 / DSM 22644 / CIP 104116 / JCM 14847 / LMG 12228 / 1C / PRS 101 / PAO1).